The sequence spans 338 residues: Phosphoribosylformylglycinamidine cyclo-ligase (338 aa).

This sequence belongs to the AIR synthase family.

Its subcellular location is the cytoplasm. The enzyme catalyses 2-formamido-N(1)-(5-O-phospho-beta-D-ribosyl)acetamidine + ATP = 5-amino-1-(5-phospho-beta-D-ribosyl)imidazole + ADP + phosphate + H(+). It functions in the pathway purine metabolism; IMP biosynthesis via de novo pathway; 5-amino-1-(5-phospho-D-ribosyl)imidazole from N(2)-formyl-N(1)-(5-phospho-D-ribosyl)glycinamide: step 2/2. The polypeptide is Phosphoribosylformylglycinamidine cyclo-ligase (Thermoplasma acidophilum (strain ATCC 25905 / DSM 1728 / JCM 9062 / NBRC 15155 / AMRC-C165)).